A 206-amino-acid polypeptide reads, in one-letter code: Urease accessory protein UreG (206 aa).

15–22 (GPVGSGKT) provides a ligand contact to GTP.

It belongs to the SIMIBI class G3E GTPase family. UreG subfamily. As to quaternary structure, homodimer. UreD, UreF and UreG form a complex that acts as a GTP-hydrolysis-dependent molecular chaperone, activating the urease apoprotein by helping to assemble the nickel containing metallocenter of UreC. The UreE protein probably delivers the nickel.

Its subcellular location is the cytoplasm. Functionally, facilitates the functional incorporation of the urease nickel metallocenter. This process requires GTP hydrolysis, probably effectuated by UreG. The protein is Urease accessory protein UreG of Ralstonia pickettii (strain 12J).